Consider the following 367-residue polypeptide: Anhydro-N-acetylmuramic acid kinase (367 aa).

An ATP-binding site is contributed by 11–18 (GTSLDGVD).

Belongs to the anhydro-N-acetylmuramic acid kinase family.

It carries out the reaction 1,6-anhydro-N-acetyl-beta-muramate + ATP + H2O = N-acetyl-D-muramate 6-phosphate + ADP + H(+). It functions in the pathway amino-sugar metabolism; 1,6-anhydro-N-acetylmuramate degradation. Its pathway is cell wall biogenesis; peptidoglycan recycling. Functionally, catalyzes the specific phosphorylation of 1,6-anhydro-N-acetylmuramic acid (anhMurNAc) with the simultaneous cleavage of the 1,6-anhydro ring, generating MurNAc-6-P. Is required for the utilization of anhMurNAc either imported from the medium or derived from its own cell wall murein, and thus plays a role in cell wall recycling. This chain is Anhydro-N-acetylmuramic acid kinase, found in Bradyrhizobium diazoefficiens (strain JCM 10833 / BCRC 13528 / IAM 13628 / NBRC 14792 / USDA 110).